A 456-amino-acid polypeptide reads, in one-letter code: Serine--tRNA ligase (456 aa).

The disordered stretch occupies residues 49-69 (HERNEVSSTIGELKQAGEEEA). Position 241–243 (241–243 (TAE)) interacts with L-serine. Residues 272–274 (RQE) and V288 each bind ATP. L-serine is bound at residue E295. 368–371 (EVSS) provides a ligand contact to ATP. S404 contacts L-serine.

This sequence belongs to the class-II aminoacyl-tRNA synthetase family. Type-1 seryl-tRNA synthetase subfamily. As to quaternary structure, homodimer. The tRNA molecule binds across the dimer.

The protein localises to the cytoplasm. The enzyme catalyses tRNA(Ser) + L-serine + ATP = L-seryl-tRNA(Ser) + AMP + diphosphate + H(+). The catalysed reaction is tRNA(Sec) + L-serine + ATP = L-seryl-tRNA(Sec) + AMP + diphosphate + H(+). Its pathway is aminoacyl-tRNA biosynthesis; selenocysteinyl-tRNA(Sec) biosynthesis; L-seryl-tRNA(Sec) from L-serine and tRNA(Sec): step 1/1. Its function is as follows. Catalyzes the attachment of serine to tRNA(Ser). Is also able to aminoacylate tRNA(Sec) with serine, to form the misacylated tRNA L-seryl-tRNA(Sec), which will be further converted into selenocysteinyl-tRNA(Sec). This is Serine--tRNA ligase from Halorubrum lacusprofundi (strain ATCC 49239 / DSM 5036 / JCM 8891 / ACAM 34).